Consider the following 206-residue polypeptide: Urease accessory protein UreG (206 aa).

15 to 22 (GPVGSGKT) contributes to the GTP binding site.

Belongs to the SIMIBI class G3E GTPase family. UreG subfamily. Homodimer. UreD, UreF and UreG form a complex that acts as a GTP-hydrolysis-dependent molecular chaperone, activating the urease apoprotein by helping to assemble the nickel containing metallocenter of UreC. The UreE protein probably delivers the nickel.

The protein localises to the cytoplasm. Its function is as follows. Facilitates the functional incorporation of the urease nickel metallocenter. This process requires GTP hydrolysis, probably effectuated by UreG. The chain is Urease accessory protein UreG from Ralstonia pickettii (strain 12J).